The following is a 472-amino-acid chain: Aspartyl/glutamyl-tRNA(Asn/Gln) amidotransferase subunit B (472 aa).

Belongs to the GatB/GatE family. GatB subfamily. Heterotrimer of A, B and C subunits.

It catalyses the reaction L-glutamyl-tRNA(Gln) + L-glutamine + ATP + H2O = L-glutaminyl-tRNA(Gln) + L-glutamate + ADP + phosphate + H(+). It carries out the reaction L-aspartyl-tRNA(Asn) + L-glutamine + ATP + H2O = L-asparaginyl-tRNA(Asn) + L-glutamate + ADP + phosphate + 2 H(+). Allows the formation of correctly charged Asn-tRNA(Asn) or Gln-tRNA(Gln) through the transamidation of misacylated Asp-tRNA(Asn) or Glu-tRNA(Gln) in organisms which lack either or both of asparaginyl-tRNA or glutaminyl-tRNA synthetases. The reaction takes place in the presence of glutamine and ATP through an activated phospho-Asp-tRNA(Asn) or phospho-Glu-tRNA(Gln). In Sulfolobus acidocaldarius (strain ATCC 33909 / DSM 639 / JCM 8929 / NBRC 15157 / NCIMB 11770), this protein is Aspartyl/glutamyl-tRNA(Asn/Gln) amidotransferase subunit B.